The following is a 342-amino-acid chain: Oxygen-dependent coproporphyrinogen-III oxidase (342 aa).

Ser98 provides a ligand contact to substrate. Positions 102 and 112 each coordinate a divalent metal cation. The active-site Proton donor is His112. 114–116 serves as a coordination point for substrate; it reads NYR. Residues His146 and His176 each contribute to the a divalent metal cation site. An important for dimerization region spans residues 266-301; that stretch reads YVEFNLVWDRGTIFGLQTNGRTESILMSLPPLARWE.

This sequence belongs to the aerobic coproporphyrinogen-III oxidase family. Homodimer. It depends on a divalent metal cation as a cofactor.

The protein resides in the cytoplasm. The enzyme catalyses coproporphyrinogen III + O2 + 2 H(+) = protoporphyrinogen IX + 2 CO2 + 2 H2O. It participates in porphyrin-containing compound metabolism; protoporphyrin-IX biosynthesis; protoporphyrinogen-IX from coproporphyrinogen-III (O2 route): step 1/1. Involved in the heme and chlorophyll biosynthesis. Catalyzes the aerobic oxidative decarboxylation of propionate groups of rings A and B of coproporphyrinogen-III to yield the vinyl groups in protoporphyrinogen-IX. The chain is Oxygen-dependent coproporphyrinogen-III oxidase from Prochlorococcus marinus (strain MIT 9312).